The sequence spans 259 residues: Borneol dehydrogenase, mitochondrial (259 aa).

The transit peptide at 1-30 directs the protein to the mitochondrion; the sequence is MASTVLRRLEGKVALITGAASGIGESAARL. Residues 21-23, aspartate 42, 63-64, and 90-92 contribute to the NAD(+) site; these read SGI, DV, and NAG. Catalysis depends on serine 144, which acts as the Proton donor. Substrate is bound by residues serine 144 and tyrosine 157. Residues tyrosine 157, lysine 161, and threonine 192 each coordinate NAD(+). Tyrosine 157 serves as the catalytic Proton acceptor. The active-site Proton donor/acceptor is lysine 161.

The protein belongs to the short-chain dehydrogenases/reductases (SDR) family. Specifically expressed in glandular trichomes of mature flowers.

The protein resides in the mitochondrion. It carries out the reaction borneol + NAD(+) = camphor + NADH + H(+). It participates in secondary metabolite biosynthesis; terpenoid biosynthesis. In terms of biological role, involved in the biosynthesis of monoterpenes natural products related to camphor. Catalyzes the conversion of borneol into camphor. This is Borneol dehydrogenase, mitochondrial from Lavandula x intermedia (Lavandin).